Reading from the N-terminus, the 216-residue chain is MTGCGSCGKIIKNIEKKYYNQLKEKDIVLVGGAVNLDDEEEVKKIMEIRKNSKVLIAVGSCAVSGGFQRMLIGLENGFPQRFVRIGDVVKVDYAIIGCPPDEEEVERIVKAVIEKDKEIVDSYLILKPYEVIAGKPIIDAYMKVNDVLLTSNKELCLGCDDKPINDEFCTGCGTCVAKCPANALTIDEKPKVNISKCIKCGTCFFNCIRVKEALLP.

4Fe-4S ferredoxin-type domains are found at residues 160 to 189 (DDKP…IDEK) and 188 to 216 (EKPK…ALLP). [4Fe-4S] cluster-binding residues include Cys-169, Cys-172, Cys-175, Cys-179, Cys-197, Cys-200, Cys-203, and Cys-207.

Belongs to the FrhG family.

This is an uncharacterized protein from Methanocaldococcus jannaschii (strain ATCC 43067 / DSM 2661 / JAL-1 / JCM 10045 / NBRC 100440) (Methanococcus jannaschii).